Consider the following 223-residue polypeptide: Small ribosomal subunit protein uS3 (223 aa).

One can recognise a KH type-2 domain in the interval 39 to 108 (IRNFVKKNSY…NILINIVEVK (70 aa)).

The protein belongs to the universal ribosomal protein uS3 family. In terms of assembly, part of the 30S ribosomal subunit. Forms a tight complex with proteins S10 and S14.

Functionally, binds the lower part of the 30S subunit head. Binds mRNA in the 70S ribosome, positioning it for translation. This is Small ribosomal subunit protein uS3 from Clostridium botulinum (strain Kyoto / Type A2).